Consider the following 363-residue polypeptide: Protein-arginine kinase (363 aa).

A Phosphagen kinase C-terminal domain is found at 24–255; that stretch reads IVLSSRIRLA…EQLIAQERAA (232 aa). Residues 27–31, His92, Arg126, 177–181, and 208–213 contribute to the ATP site; these read SSRIR, RASVM, and RGTYGE. The RDXXRA motif of the pArg binding pocket involved in allosteric regulation signature appears at 338–343; the sequence is RDVRRA.

Belongs to the ATP:guanido phosphotransferase family. As to quaternary structure, homodimer. Dimerization is important for full catalytic activity.

It carries out the reaction L-arginyl-[protein] + ATP = N(omega)-phospho-L-arginyl-[protein] + ADP + H(+). With respect to regulation, appears to be allosterically activated by the binding of pArg-containing polypeptides to the pArg-binding pocket localized in the C-terminal domain of McsB. Functionally, catalyzes the specific phosphorylation of arginine residues in a large number of proteins. Is part of the bacterial stress response system, where it is involved in regulating the global heat shock repressor CtsR; phosphorylates arginine residues in the winged helix-turn-helix domain of CtsR, thereby preventing its binding to DNA and consequently inducing the expression of repressed genes. Protein arginine phosphorylation has a physiologically important role and is involved in the regulation of many critical cellular processes, such as protein homeostasis, motility, competence, and stringent and stress responses, by regulating gene expression and protein activity. Acts exclusively on Arg residues, since it cannot phosphorylate Tyr, Ser, Thr, His, Asp and Lys. Has no free arginine kinase activity. The chain is Protein-arginine kinase from Geobacillus stearothermophilus (Bacillus stearothermophilus).